A 279-amino-acid polypeptide reads, in one-letter code: MTLLRGDDFFTSRAVTVAVEPRTPQTAFPEHYHDFWEIVLVEQGAGVHVFNDQPYALCSGSVFFVRDNDRHLFEDVEGLCLTNMLYRSPRGFRFLSDIAAFLPYGPNGEWQGQWQVNAAGMQQLKQSLNSLAGLAQSDAPEAIAASESLFLQILVQLRQHCFQTEGNGSERQGVQALLGWLQNNYSEEVNWGGLADQFSLPLRTLHRQLKQHTGMTPQRYLNRLRLLEARRRLQQSDDSITTIAHACGFSDSNHFSTQFRKAFSQAPKSLRHQAFSREE.

In terms of domain architecture, HTH araC/xylS-type spans 175 to 273 (QALLGWLQNN…SQAPKSLRHQ (99 aa)). 2 consecutive DNA-binding regions (H-T-H motif) follow at residues 192–213 (GGLA…KQHT) and 240–263 (ITTI…RKAF).

In terms of assembly, binds DNA as a dimer.

Its subcellular location is the cytoplasm. Activates expression of the rhaBAD and rhaT operons. The chain is HTH-type transcriptional activator RhaS from Pectobacterium atrosepticum (strain SCRI 1043 / ATCC BAA-672) (Erwinia carotovora subsp. atroseptica).